A 632-amino-acid chain; its full sequence is DNA gyrase subunit B (632 aa).

The 115-residue stretch at Arg-419 to Pro-533 folds into the Toprim domain. Glu-425, Asp-498, and Asp-500 together coordinate Mg(2+).

The protein belongs to the type II topoisomerase GyrB family. As to quaternary structure, heterotetramer, composed of two GyrA and two GyrB chains. In the heterotetramer, GyrA contains the active site tyrosine that forms a transient covalent intermediate with DNA, while GyrB binds cofactors and catalyzes ATP hydrolysis. Mg(2+) serves as cofactor. It depends on Mn(2+) as a cofactor. Requires Ca(2+) as cofactor.

It localises to the cytoplasm. The catalysed reaction is ATP-dependent breakage, passage and rejoining of double-stranded DNA.. In terms of biological role, a type II topoisomerase that negatively supercoils closed circular double-stranded (ds) DNA in an ATP-dependent manner to modulate DNA topology and maintain chromosomes in an underwound state. Negative supercoiling favors strand separation, and DNA replication, transcription, recombination and repair, all of which involve strand separation. Also able to catalyze the interconversion of other topological isomers of dsDNA rings, including catenanes and knotted rings. Type II topoisomerases break and join 2 DNA strands simultaneously in an ATP-dependent manner. The polypeptide is DNA gyrase subunit B (Archaeoglobus fulgidus (strain ATCC 49558 / DSM 4304 / JCM 9628 / NBRC 100126 / VC-16)).